The primary structure comprises 337 residues: uncharacterized protein (337 aa).

In terms of domain architecture, MurNAc-LAA spans 3–174; the sequence is IAVRGGHNFK…IGKLIAEAIN (172 aa).

This sequence to C.perfringens pIP404 ORF10.

This is an uncharacterized protein from Clostridium perfringens (strain 13 / Type A).